A 518-amino-acid chain; its full sequence is Light-independent protochlorophyllide reductase subunit B (518 aa).

Position 36 (aspartate 36) interacts with [4Fe-4S] cluster. Residue aspartate 299 is the Proton donor of the active site. 434–435 contacts substrate; sequence GM.

This sequence belongs to the ChlB/BchB/BchZ family. Protochlorophyllide reductase is composed of three subunits; ChlL, ChlN and ChlB. Forms a heterotetramer of two ChlB and two ChlN subunits. It depends on [4Fe-4S] cluster as a cofactor.

Its subcellular location is the plastid. The protein localises to the chloroplast. It carries out the reaction chlorophyllide a + oxidized 2[4Fe-4S]-[ferredoxin] + 2 ADP + 2 phosphate = protochlorophyllide a + reduced 2[4Fe-4S]-[ferredoxin] + 2 ATP + 2 H2O. Its pathway is porphyrin-containing compound metabolism; chlorophyll biosynthesis (light-independent). Functionally, component of the dark-operative protochlorophyllide reductase (DPOR) that uses Mg-ATP and reduced ferredoxin to reduce ring D of protochlorophyllide (Pchlide) to form chlorophyllide a (Chlide). This reaction is light-independent. The NB-protein (ChlN-ChlB) is the catalytic component of the complex. The protein is Light-independent protochlorophyllide reductase subunit B of Adiantum capillus-veneris (Maidenhair fern).